The sequence spans 239 residues: MKDTLFNQSLNKRFCFDEKVAHVFDDMLERSIPYYYEMLDLGAYFIAQNLKENLNAKPLIYDLGCSTGNFFIALNQQIQQDIELVGIDNSMPMLKKAQEKLKDFKNARFECMDFLEVEFKEASAFSLLFVLQFVRPMQREVLLKKIYNSLALNGVLLVGEKIMSEDRILDKQMIELYYLYKQNQGYSHNEIAFKREALENVLVPYSLKENIALLESVGFKHVEAVFKWVNFTLLAARKT.

S-adenosyl-L-methionine-binding positions include Tyr-35, 64–66, 88–89, and Arg-195; these read GCS and DN.

This sequence belongs to the class I-like SAM-binding methyltransferase superfamily. Cx-SAM synthase family. Homodimer.

The catalysed reaction is prephenate + S-adenosyl-L-methionine = carboxy-S-adenosyl-L-methionine + 3-phenylpyruvate + H2O. Catalyzes the conversion of S-adenosyl-L-methionine (SAM) to carboxy-S-adenosyl-L-methionine (Cx-SAM). The polypeptide is Carboxy-S-adenosyl-L-methionine synthase (Helicobacter pylori (strain G27)).